Consider the following 372-residue polypeptide: Alpha-1-antitrypsin homolog (372 aa).

Residues 1 to 19 (MPATCLLHTMLTLPSPSTR) form the signal peptide. N-linked (GlcNAc...) asparagine glycans are attached at residues asparagine 214 and asparagine 226. Positions 328–347 (AATTIEIMPMSLPDTVILNR) are RCL.

This sequence belongs to the serpin family.

It localises to the secreted. The polypeptide is Alpha-1-antitrypsin homolog (Cyprinus carpio (Common carp)).